Here is a 292-residue protein sequence, read N- to C-terminus: 4-diphosphocytidyl-2-C-methyl-D-erythritol kinase (292 aa).

Residue Lys-20 is part of the active site. An ATP-binding site is contributed by 103 to 113 (PMGGGIGGGSS). Residue Asp-145 is part of the active site.

It belongs to the GHMP kinase family. IspE subfamily.

It carries out the reaction 4-CDP-2-C-methyl-D-erythritol + ATP = 4-CDP-2-C-methyl-D-erythritol 2-phosphate + ADP + H(+). It participates in isoprenoid biosynthesis; isopentenyl diphosphate biosynthesis via DXP pathway; isopentenyl diphosphate from 1-deoxy-D-xylulose 5-phosphate: step 3/6. Catalyzes the phosphorylation of the position 2 hydroxy group of 4-diphosphocytidyl-2C-methyl-D-erythritol. This chain is 4-diphosphocytidyl-2-C-methyl-D-erythritol kinase, found in Cupriavidus taiwanensis (strain DSM 17343 / BCRC 17206 / CCUG 44338 / CIP 107171 / LMG 19424 / R1) (Ralstonia taiwanensis (strain LMG 19424)).